The primary structure comprises 533 residues: Putative phosphate permease HP_1491 (533 aa).

Transmembrane regions (helical) follow at residues 23–43 (IALA…FGQA), 47–67 (GLLL…IGAN), 81–101 (AISM…GAII), 129–149 (VMLA…LIGA), 156–176 (SVVG…AVNW), 182–202 (IVAS…FFLM), 221–241 (VVPY…IVKV), 248–268 (LNFE…FILF), 286–306 (INEL…FAHG), 338–358 (VPLW…SLYG), 372–392 (LDKM…LLAS), and 509–529 (LVTV…LGFI).

Belongs to the inorganic phosphate transporter (PiT) (TC 2.A.20) family.

The protein resides in the cell membrane. Potential transporter for phosphate. This Helicobacter pylori (strain ATCC 700392 / 26695) (Campylobacter pylori) protein is Putative phosphate permease HP_1491.